The primary structure comprises 176 residues: Small ribosomal subunit protein bS6 (176 aa).

Positions 97–176 are disordered; it reads DQYTPNDSPP…VEPVDTTSEE (80 aa). A compositionally biased stretch (low complexity) spans 140–160; that stretch reads AVETVEPPAEPAEPVEAVETV. A compositionally biased stretch (acidic residues) spans 161–176; sequence DTTEETVEPVDTTSEE.

It belongs to the bacterial ribosomal protein bS6 family.

Functionally, binds together with bS18 to 16S ribosomal RNA. The sequence is that of Small ribosomal subunit protein bS6 from Gloeothece citriformis (strain PCC 7424) (Cyanothece sp. (strain PCC 7424)).